The sequence spans 272 residues: 3-methyl-2-oxobutanoate hydroxymethyltransferase (272 aa).

Residues Asp-43 and Asp-82 each contribute to the Mg(2+) site. 3-methyl-2-oxobutanoate is bound by residues 43–44, Asp-82, and Lys-112; that span reads DS. Glu-114 is a Mg(2+) binding site. The active-site Proton acceptor is the Glu-179.

It belongs to the PanB family. In terms of assembly, homodecamer; pentamer of dimers. Mg(2+) is required as a cofactor.

Its subcellular location is the cytoplasm. The catalysed reaction is 3-methyl-2-oxobutanoate + (6R)-5,10-methylene-5,6,7,8-tetrahydrofolate + H2O = 2-dehydropantoate + (6S)-5,6,7,8-tetrahydrofolate. The protein operates within cofactor biosynthesis; (R)-pantothenate biosynthesis; (R)-pantoate from 3-methyl-2-oxobutanoate: step 1/2. Its function is as follows. Catalyzes the reversible reaction in which hydroxymethyl group from 5,10-methylenetetrahydrofolate is transferred onto alpha-ketoisovalerate to form ketopantoate. This Staphylococcus aureus (strain MRSA252) protein is 3-methyl-2-oxobutanoate hydroxymethyltransferase.